The following is a 704-amino-acid chain: Polyribonucleotide nucleotidyltransferase (704 aa).

Aspartate 487 and aspartate 493 together coordinate Mg(2+). Residues 554 to 613 form the KH domain; it reads PRLLTIKIHPDKIREVIGKGGSTIQAITKETGTQIDIQDDGTIIIASVNAIAAQAAKSRI. An S1 motif domain is found at 623–691; that stretch reads GRIYEGKVAK…KQGRIRLSIK (69 aa).

It belongs to the polyribonucleotide nucleotidyltransferase family. As to quaternary structure, component of the RNA degradosome, which is a multiprotein complex involved in RNA processing and mRNA degradation. The cofactor is Mg(2+).

The protein resides in the cytoplasm. The enzyme catalyses RNA(n+1) + phosphate = RNA(n) + a ribonucleoside 5'-diphosphate. Involved in mRNA degradation. Catalyzes the phosphorolysis of single-stranded polyribonucleotides processively in the 3'- to 5'-direction. The sequence is that of Polyribonucleotide nucleotidyltransferase from Xanthomonas euvesicatoria pv. vesicatoria (strain 85-10) (Xanthomonas campestris pv. vesicatoria).